A 464-amino-acid chain; its full sequence is Sulfoacetaldehyde dehydrogenase (acylating) (464 aa).

The Nucleophile role is filled by C241.

This sequence belongs to the aldehyde dehydrogenase family.

The catalysed reaction is sulfoacetaldehyde + NADP(+) + CoA = sulfoacetyl-CoA + NADPH + H(+). In terms of biological role, involved in the degradation of sulfoacetate. Catalyzes the conversion of sulfoacetyl-CoA and NADPH to sulfoacetaldehyde, CoA and NADP(+). A much lower level of activity (1%) is observed when NADP(+) is replaced with NAD(+). The protein is Sulfoacetaldehyde dehydrogenase (acylating) of Bilophila wadsworthia (strain 3_1_6).